The primary structure comprises 208 residues: Glutathione S-transferase (208 aa).

One can recognise a GST N-terminal domain in the interval 1–78 (MSYKLTYFPI…HLARKFNLNG (78 aa)). Residues Tyr7, Lys42, 49 to 50 (QL), and 62 to 63 (QS) each bind glutathione. One can recognise a GST C-terminal domain in the interval 80-200 (NNAETSYVDM…YCAKRNASKM (121 aa)).

The protein belongs to the GST superfamily. Pi family. In terms of assembly, homodimer.

It carries out the reaction RX + glutathione = an S-substituted glutathione + a halide anion + H(+). In terms of biological role, conjugation of reduced glutathione to a wide number of exogenous and endogenous hydrophobic electrophiles. In Dirofilaria immitis (Canine heartworm), this protein is Glutathione S-transferase.